Reading from the N-terminus, the 574-residue chain is Squalene monooxygenase (574 aa).

Over 1–20 (MWTFLGIATFTYFYKKFGDF) the chain is Cytoplasmic. Positions 1-100 (MWTFLGIATF…EQLEARRRRK (100 aa)) are interaction with MARCHF6. An intramembrane segment occupies 21 to 41 (ITLANREVLLCVLVFLSLGLV). At 42 to 574 (LSYRCRHRNG…IYSEMKYMVH (533 aa)) the chain is on the cytoplasmic side. The required for degradation in response to high membrane cholesterol levels stretch occupies residues 62–73 (QFALFSDILSGL). The sufficient for enzyme activity stretch occupies residues 118–574 (TSSQNDPEVI…IYSEMKYMVH (457 aa)). Residues 133–134 (VL), 153–154 (ER), arginine 161, phenylalanine 166, arginine 234, valine 250, aspartate 408, and methionine 421 each bind FAD. Positions 516–574 (PLVLIGHFFAVAIYAVYFCFKSEPWITKPRALLSSGAVLYKACSVIFPLIYSEMKYMVH) are hydrophobic; mediates interaction with membranes.

Belongs to the squalene monooxygenase family. Interacts (via N-terminal domain) with MARCHF6. Interacts with SMIM22; this interaction modulates lipid droplet formation. FAD is required as a cofactor. In terms of processing, ubiquitinated by MARCHF6 in response to high cholesterol levels in intracellular membranes, leading to proteasomal degradation. Detected in liver (at protein level).

It is found in the microsome membrane. The protein resides in the endoplasmic reticulum membrane. The catalysed reaction is squalene + reduced [NADPH--hemoprotein reductase] + O2 = (S)-2,3-epoxysqualene + oxidized [NADPH--hemoprotein reductase] + H2O + H(+). The protein operates within terpene metabolism; lanosterol biosynthesis; lanosterol from farnesyl diphosphate: step 2/3. With respect to regulation, inhibited by NB-598 ((E)N-ethyl-N-(6,6-dimethyl-2-hepten-4-ynyl)-3-[(3,3'-bi-thiophen-5-yl)methoxy]benzene-methanamine). Contrary to fungal enzymes, the mammalian enzyme is only slightly inhibited by terbinafine. Inhibited by tellurite, tellurium dioxide, selenite, and selenium dioxide. Catalyzes the stereospecific oxidation of squalene to (S)-2,3-epoxysqualene, and is considered to be a rate-limiting enzyme in steroid biosynthesis. The polypeptide is Squalene monooxygenase (SQLE) (Homo sapiens (Human)).